The chain runs to 200 residues: NADH-quinone oxidoreductase subunit C (200 aa).

It belongs to the complex I 30 kDa subunit family. NDH-1 is composed of 14 different subunits. Subunits NuoB, C, D, E, F, and G constitute the peripheral sector of the complex.

It localises to the cell inner membrane. The enzyme catalyses a quinone + NADH + 5 H(+)(in) = a quinol + NAD(+) + 4 H(+)(out). In terms of biological role, NDH-1 shuttles electrons from NADH, via FMN and iron-sulfur (Fe-S) centers, to quinones in the respiratory chain. The immediate electron acceptor for the enzyme in this species is believed to be ubiquinone. Couples the redox reaction to proton translocation (for every two electrons transferred, four hydrogen ions are translocated across the cytoplasmic membrane), and thus conserves the redox energy in a proton gradient. This Burkholderia cenocepacia (strain HI2424) protein is NADH-quinone oxidoreductase subunit C.